The following is a 263-amino-acid chain: Glutamate 5-kinase (263 aa).

Residue lysine 14 coordinates ATP. Positions 52, 137, and 149 each coordinate substrate. ATP-binding positions include 169–170 (SD) and 211–217 (TGGIVTK).

Belongs to the glutamate 5-kinase family. Homotetramer; oligomerization is not affected by L-proline feedback inhibition. The cofactor is Mg(2+).

It catalyses the reaction L-glutamate + ATP = L-glutamyl 5-phosphate + ADP. Its pathway is amino-acid biosynthesis; L-proline biosynthesis; L-glutamate 5-semialdehyde from L-glutamate: step 1/2. Its activity is regulated as follows. Inhibited by L-proline as part of a negative feedback loop. Also inhibited by L-proline analogs 3,4-dehydro-L-proline, L-azetidine-2-carboxylic acid and L-4-thiazolidine carboxylic acid. Functionally, catalyzes the transfer of a phosphate group to glutamate to form L-glutamate 5-phosphate. May be important for growth and survival. This chain is Glutamate 5-kinase, found in Leishmania donovani.